Here is a 317-residue protein sequence, read N- to C-terminus: Glutaminase (317 aa).

Positions 67, 118, 162, 169, 193, 245, and 263 each coordinate substrate.

Belongs to the glutaminase family. In terms of assembly, homotetramer.

It catalyses the reaction L-glutamine + H2O = L-glutamate + NH4(+). The protein is Glutaminase of Brucella abortus (strain S19).